Reading from the N-terminus, the 108-residue chain is Circadian clock oscillator protein KaiB (108 aa).

The protein belongs to the KaiB family. Undergoes a major conformational rearrangment; in the free state forms homotetramers with 2 dimers. When bound to the CI domain of KaiC, KaiA or CikA switches to a monomeric thioredoxin-fold (KaiB(fs)). The KaiABC complex composition changes during the circadian cycle to control KaiC phosphorylation. Complexes KaiC(6), KaiA(2-4):KaiC(6), KaiB(6):KaiC(6) and KaiC(6):KaiB(6):KaiA(12) are among the most important forms, many form cooperatively. Binds to KaiA; 1 KaiB(fs) binds to the KaiA homodimer. Binds to the B-loop in the CI domain of KaiC; SasA and KaiB compete to bind to the CI domain. Binding to KaiC CI domain occurs 1:1. KaiA and CikA bind to the same region of KaiB(fs) and therefore compete.

Its function is as follows. Key component of the KaiABC oscillator complex, which constitutes the main circadian regulator in cyanobacteria. Its composition changes during the circadian cycle to control KaiC phosphorylation. KaiA stimulates KaiC autophosphorylation, while KaiB sequesters KaiA, leading to KaiC autodephosphorylation. KaiA binding to KaiC yields KaiA(2-4):KaiC(6) complexes which stimulate KaiC autophosphorylation. Phospho-Ser-431 KaiC accumulation triggers binding of KaiB to form the KaiB(6):KaiC(6) complex, leading to changes in the output regulators CikA and SasA. KaiB switches to a thioredoxin-like fold (KaiB(fs)) in complex with KaiC. KaiB(6):KaiC(6) formation exposes a site for KaiA binding that sequesters KaiA from the CII domain, making the KaiC(6):KaiB(6):KaiA(12) complex that results in KaiC autodephosphorylation. Complete dephosphorylation of KaiC leads to dissociation of KaiA(2):KaiB(1), completing 1 cycle of the Kai oscillator. A metamorphic protein which reversibly switches between an inactive tetrameric fold and a rare, thioredoxin-like monomeric fold (KaiB(fs)). KaiB(fs) binds phospho-KaiC, KaiA and CikA. KaiA and CikA compete for binding to KaiB(fs), and KaiB(fs) and SasA compete for binding to KaiC, thus the clock oscillator and output signal pathway are tightly coupled. This is Circadian clock oscillator protein KaiB from Thermosynechococcus vestitus (strain NIES-2133 / IAM M-273 / BP-1).